The chain runs to 635 residues: Threonine--tRNA ligase (635 aa).

Residues 1–61 (MINISLSDGS…ENNCKLRILT (61 aa)) form the TGS domain. Residues 242–533 (DHRKLGRELD…LIEEYAGCFP (292 aa)) form a catalytic region. Positions 333, 384, and 510 each coordinate Zn(2+).

Belongs to the class-II aminoacyl-tRNA synthetase family. As to quaternary structure, homodimer. Requires Zn(2+) as cofactor.

The protein resides in the cytoplasm. The catalysed reaction is tRNA(Thr) + L-threonine + ATP = L-threonyl-tRNA(Thr) + AMP + diphosphate + H(+). Its function is as follows. Catalyzes the attachment of threonine to tRNA(Thr) in a two-step reaction: L-threonine is first activated by ATP to form Thr-AMP and then transferred to the acceptor end of tRNA(Thr). Also edits incorrectly charged L-seryl-tRNA(Thr). The sequence is that of Threonine--tRNA ligase from Rickettsia canadensis (strain McKiel).